A 1043-amino-acid chain; its full sequence is Probable inorganic carbon transporter subunit DabA (1043 aa).

Zn(2+) is bound by residues Cys-460, Asp-462, His-719, and Cys-734.

This sequence belongs to the inorganic carbon transporter (TC 9.A.2) DabA family. In terms of assembly, forms a complex with DabB. Requires Zn(2+) as cofactor.

The protein localises to the cell inner membrane. Its function is as follows. Part of an energy-coupled inorganic carbon pump. The sequence is that of Probable inorganic carbon transporter subunit DabA from Thiobacillus denitrificans (strain ATCC 25259 / T1).